An 87-amino-acid chain; its full sequence is Putative phytosulfokines 4 (87 aa).

Positions 1-23 are cleaved as a signal peptide; that stretch reads MANLSTLITIALLLCATMLTCSA. Residues 24-77 constitute a propeptide that is removed on maturation; sequence RPEPAYFASFTTSPADTLSLEMIESKLHEVAGESCDKEDDEDCLVRRTLTAHLD. 2 positions are modified to sulfotyrosine: Tyr78 and Tyr80. A propeptide spanning residues 83-87 is cleaved from the precursor; it reads KNNHH.

The protein belongs to the phytosulfokine family. Sulfation is important for activity and for the binding to a putative membrane receptor.

The protein resides in the secreted. Its function is as follows. Promotes plant cell differentiation, organogenesis and somatic embryogenesis as well as cell proliferation. This is Putative phytosulfokines 4 (PSK4) from Arabidopsis thaliana (Mouse-ear cress).